The chain runs to 341 residues: Tetraacyldisaccharide 4'-kinase (341 aa).

T54–T61 is an ATP binding site.

It belongs to the LpxK family.

It carries out the reaction a lipid A disaccharide + ATP = a lipid IVA + ADP + H(+). It participates in glycolipid biosynthesis; lipid IV(A) biosynthesis; lipid IV(A) from (3R)-3-hydroxytetradecanoyl-[acyl-carrier-protein] and UDP-N-acetyl-alpha-D-glucosamine: step 6/6. In terms of biological role, transfers the gamma-phosphate of ATP to the 4'-position of a tetraacyldisaccharide 1-phosphate intermediate (termed DS-1-P) to form tetraacyldisaccharide 1,4'-bis-phosphate (lipid IVA). This chain is Tetraacyldisaccharide 4'-kinase, found in Brucella ovis (strain ATCC 25840 / 63/290 / NCTC 10512).